Consider the following 24-residue polypeptide: Brevinin-1SPc (24 aa).

Cysteine 18 and cysteine 24 form a disulfide bridge.

As to expression, expressed by the skin glands.

The protein resides in the secreted. Its function is as follows. Antimicrobial peptide with activity against Gram-negative and Gram-positive bacteria and fungi. Also shows hemolytic activity. This Lithobates septentrionalis (Mink frog) protein is Brevinin-1SPc.